We begin with the raw amino-acid sequence, 516 residues long: Squalene epoxidase 4 (516 aa).

Transmembrane regions (helical) follow at residues 2-22 (TYAWLWTLLAFVLTWMVFHLI) and 43-63 (ATDVIIVGAGVAGASLAYALA). FAD is bound by residues 53–54 (VA), 73–74 (ER), Arg-81, Arg-153, Val-169, Asp-335, and Met-348. The helical transmembrane segment at 435–455 (ILGGMNPHPLTLVLHLVAITL) threads the bilayer.

Belongs to the squalene monooxygenase family. Requires FAD as cofactor. Expressed mainly in seedlings and inflorescences.

It localises to the membrane. It catalyses the reaction squalene + reduced [NADPH--hemoprotein reductase] + O2 = (S)-2,3-epoxysqualene + oxidized [NADPH--hemoprotein reductase] + H2O + H(+). It participates in terpene metabolism; lanosterol biosynthesis; lanosterol from farnesyl diphosphate: step 2/3. Its function is as follows. Catalyzes the stereospecific oxidation of squalene to (S)-2,3-epoxysqualene, and is considered to be a rate-limiting enzyme in steroid biosynthesis. The sequence is that of Squalene epoxidase 4 (SQE4) from Arabidopsis thaliana (Mouse-ear cress).